The primary structure comprises 905 residues: Probable cation-transporting ATPase F (905 aa).

A run of 3 helical transmembrane segments spans residues 84-104, 248-268, and 283-303; these read EFVDAAVIFGVVVINAIVGFI, FSKFLTIAILGLAALTFGVGL, and ALAVGAIPEGLPTAVTITLAI. Catalysis depends on Asp333, which acts as the 4-aspartylphosphate intermediate. The Mg(2+) site is built by Asp643 and Asp647. A run of 6 helical transmembrane segments spans residues 716-736, 738-758, 778-798, 808-828, 842-862, and 872-892; these read ILAAIAVGVALPILPTQILWI, MTTAIALGLMLAFEPKEAGIM, TLLVSTLLVASAWWLFAWELD, TAALNLFVVVEAFYLFSCRSL, WIILGVSAQAIAQFAITYLPA, and IDIGVWVRIFAVATAITIVVA.

It belongs to the cation transport ATPase (P-type) (TC 3.A.3) family. Type IIA subfamily.

Its subcellular location is the cell membrane. It carries out the reaction ATP + H2O = ADP + phosphate + H(+). The chain is Probable cation-transporting ATPase F (ctpF) from Mycobacterium bovis (strain ATCC BAA-935 / AF2122/97).